The following is a 406-amino-acid chain: Dihydroorotase, mitochondrial (406 aa).

A mitochondrion-targeting transit peptide spans 1 to 41 (MQTAATSTFFANPHVKHLPGPFLRPSPHYGALVHLPSFRNK). Zn(2+) is bound by residues H69, H71, K155, H193, H231, and D305. The residue at position 155 (K155) is an N6-carboxylysine.

Belongs to the metallo-dependent hydrolases superfamily. DHOase family. Class II DHOase subfamily. The cofactor is Zn(2+).

It is found in the mitochondrion. It catalyses the reaction (S)-dihydroorotate + H2O = N-carbamoyl-L-aspartate + H(+). The protein operates within pyrimidine metabolism; UMP biosynthesis via de novo pathway; (S)-dihydroorotate from bicarbonate: step 3/3. The polypeptide is Dihydroorotase, mitochondrial (PYRC) (Oryza sativa subsp. japonica (Rice)).